We begin with the raw amino-acid sequence, 420 residues long: UDP-N-acetylglucosamine 1-carboxyvinyltransferase (420 aa).

A phosphoenolpyruvate-binding site is contributed by 22–23 (KN). Residue Arg93 coordinates UDP-N-acetyl-alpha-D-glucosamine. Residue Cys117 is the Proton donor of the active site. Cys117 carries the 2-(S-cysteinyl)pyruvic acid O-phosphothioketal modification. Residues Asp307 and Val329 each coordinate UDP-N-acetyl-alpha-D-glucosamine.

It belongs to the EPSP synthase family. MurA subfamily.

It localises to the cytoplasm. It catalyses the reaction phosphoenolpyruvate + UDP-N-acetyl-alpha-D-glucosamine = UDP-N-acetyl-3-O-(1-carboxyvinyl)-alpha-D-glucosamine + phosphate. The protein operates within cell wall biogenesis; peptidoglycan biosynthesis. Cell wall formation. Adds enolpyruvyl to UDP-N-acetylglucosamine. In Marinobacter nauticus (strain ATCC 700491 / DSM 11845 / VT8) (Marinobacter aquaeolei), this protein is UDP-N-acetylglucosamine 1-carboxyvinyltransferase.